The following is a 133-amino-acid chain: Large ribosomal subunit protein uL22c (133 aa).

This sequence belongs to the universal ribosomal protein uL22 family. Part of the 50S ribosomal subunit.

It is found in the plastid. It localises to the chloroplast. Its function is as follows. This protein binds specifically to 23S rRNA. The globular domain of the protein is located near the polypeptide exit tunnel on the outside of the subunit, while an extended beta-hairpin is found that lines the wall of the exit tunnel in the center of the 70S ribosome. This chain is Large ribosomal subunit protein uL22c (rpl22), found in Manihot esculenta (Cassava).